The following is a 91-amino-acid chain: C-C motif chemokine 5 (91 aa).

The signal sequence occupies residues 1–23 (MKVSAATFAILLATATFRAPASA). 2 disulfides stabilise this stretch: Cys33-Cys57 and Cys34-Cys73.

This sequence belongs to the intercrine beta (chemokine CC) family.

It localises to the secreted. In terms of biological role, chemoattractant for blood monocytes, memory T-helper cells and eosinophils. Causes the release of histamine from basophils and activates eosinophils. May activate several chemokine receptors including CCR1, CCR3, CCR4 and CCR5. May also be an agonist of the G protein-coupled receptor GPR75. Together with GPR75, may play a role in neuron survival through activation of a downstream signaling pathway involving the PI3, Akt and MAP kinases. By activating GPR75 may also play a role in insulin secretion by islet cells. The polypeptide is C-C motif chemokine 5 (CCL5) (Canis lupus familiaris (Dog)).